A 427-amino-acid chain; its full sequence is UDP-N-acetylglucosamine 1-carboxyvinyltransferase (427 aa).

22-23 (KN) is a phosphoenolpyruvate binding site. Arginine 99 serves as a coordination point for UDP-N-acetyl-alpha-D-glucosamine. Catalysis depends on cysteine 123, which acts as the Proton donor. A 2-(S-cysteinyl)pyruvic acid O-phosphothioketal modification is found at cysteine 123. Residues 128 to 132 (RPIDL), aspartate 313, and isoleucine 335 contribute to the UDP-N-acetyl-alpha-D-glucosamine site.

This sequence belongs to the EPSP synthase family. MurA subfamily.

It is found in the cytoplasm. It carries out the reaction phosphoenolpyruvate + UDP-N-acetyl-alpha-D-glucosamine = UDP-N-acetyl-3-O-(1-carboxyvinyl)-alpha-D-glucosamine + phosphate. It participates in cell wall biogenesis; peptidoglycan biosynthesis. Its function is as follows. Cell wall formation. Adds enolpyruvyl to UDP-N-acetylglucosamine. This is UDP-N-acetylglucosamine 1-carboxyvinyltransferase from Novosphingobium aromaticivorans (strain ATCC 700278 / DSM 12444 / CCUG 56034 / CIP 105152 / NBRC 16084 / F199).